We begin with the raw amino-acid sequence, 389 residues long: MSEIRFTNLTWDQVITLDQVLDEVIPIHGKGNFPTMEVKPKDIIHVVKDQLIGQGIIVKDARLNGSVASYILASHNGISYKDLDVIFGVELPGNEEFQVVKDAVLDCLLDFLPKDVKKEKLSPDIMKDAYVQKLVKVCNGHDCWSLISLSNNTGKNLELKFVSSLRRQFEFSVDSFQIVLDPMLDFYSDKNAKLTKESYPVVVAESMYGDFQEAMTHLQHKLICTRKPEEIRGGGLLKYCSLLVHGFKPACMSEIKNLERYMCSRFFIDFPHIEEQQKKIESYLHNHFIGEGMTKYDYLMTLHGVVNESTVCLMSYERRQILHLITMMALKVLGELNILPNTQKVTCFYQPAPYFAAEARYPIYVIPEPPPVSFQPYHPLHFRGSNGMS.

The protein belongs to the TENT family. As to expression, restricted to testis.

It carries out the reaction RNA(n) + ATP = RNA(n)-3'-adenine ribonucleotide + diphosphate. Its function is as follows. Catalyzes the transfer of one adenosine molecule from an ATP to an mRNA poly(A) tail bearing a 3'-OH terminal group. The polypeptide is Terminal nucleotidyltransferase 5D (Homo sapiens (Human)).